The following is a 150-amino-acid chain: D-aminoacyl-tRNA deacylase (150 aa).

Positions 138–139 match the Gly-cisPro motif, important for rejection of L-amino acids motif; it reads GP.

Belongs to the DTD family. Homodimer.

The protein localises to the cytoplasm. It carries out the reaction glycyl-tRNA(Ala) + H2O = tRNA(Ala) + glycine + H(+). It catalyses the reaction a D-aminoacyl-tRNA + H2O = a tRNA + a D-alpha-amino acid + H(+). An aminoacyl-tRNA editing enzyme that deacylates mischarged D-aminoacyl-tRNAs. Also deacylates mischarged glycyl-tRNA(Ala), protecting cells against glycine mischarging by AlaRS. Acts via tRNA-based rather than protein-based catalysis; rejects L-amino acids rather than detecting D-amino acids in the active site. By recycling D-aminoacyl-tRNA to D-amino acids and free tRNA molecules, this enzyme counteracts the toxicity associated with the formation of D-aminoacyl-tRNA entities in vivo and helps enforce protein L-homochirality. This Phocaeicola vulgatus (strain ATCC 8482 / DSM 1447 / JCM 5826 / CCUG 4940 / NBRC 14291 / NCTC 11154) (Bacteroides vulgatus) protein is D-aminoacyl-tRNA deacylase.